Here is a 370-residue protein sequence, read N- to C-terminus: GTPase Obg (370 aa).

In terms of domain architecture, Obg spans 1–159 (MKFIDEARIE…RMLRLELKVL (159 aa)). The disordered stretch occupies residues 127 to 146 (NLHFKSSTNRAPRQKTDGKP). One can recognise an OBG-type G domain in the interval 160–334 (ADVGLLGMPN…LCYAIYDYLA (175 aa)). GTP-binding positions include 166-173 (GMPNAGKS), 191-195 (FTTLA), 213-216 (DIPG), 284-287 (NKLD), and 315-317 (SAL). The Mg(2+) site is built by Ser-173 and Thr-193. The interval 350-370 (ADVRFRDAPPSDGGATSGGDA) is disordered.

It belongs to the TRAFAC class OBG-HflX-like GTPase superfamily. OBG GTPase family. As to quaternary structure, monomer. The cofactor is Mg(2+).

The protein resides in the cytoplasm. Its function is as follows. An essential GTPase which binds GTP, GDP and possibly (p)ppGpp with moderate affinity, with high nucleotide exchange rates and a fairly low GTP hydrolysis rate. Plays a role in control of the cell cycle, stress response, ribosome biogenesis and in those bacteria that undergo differentiation, in morphogenesis control. The chain is GTPase Obg from Burkholderia vietnamiensis (strain G4 / LMG 22486) (Burkholderia cepacia (strain R1808)).